The primary structure comprises 121 residues: Large ribosomal subunit protein bL20 (121 aa).

This sequence belongs to the bacterial ribosomal protein bL20 family.

In terms of biological role, binds directly to 23S ribosomal RNA and is necessary for the in vitro assembly process of the 50S ribosomal subunit. It is not involved in the protein synthesizing functions of that subunit. The sequence is that of Large ribosomal subunit protein bL20 from Sphingopyxis alaskensis (strain DSM 13593 / LMG 18877 / RB2256) (Sphingomonas alaskensis).